Here is a 116-residue protein sequence, read N- to C-terminus: Large ribosomal subunit protein uL22c (116 aa).

Belongs to the universal ribosomal protein uL22 family. Part of the 50S ribosomal subunit.

Its subcellular location is the plastid. It is found in the chloroplast. Functionally, this protein binds specifically to 23S rRNA. In terms of biological role, the globular domain of the protein is located near the polypeptide exit tunnel on the outside of the subunit, while an extended beta-hairpin is found that lines the wall of the exit tunnel in the center of the 70S ribosome. This chain is Large ribosomal subunit protein uL22c (rpl22), found in Euglena gracilis.